Reading from the N-terminus, the 38-residue chain is MKVKASVKKRSEDDIIVRRKGRVYVINKKNRRHNQRQG.

The protein belongs to the bacterial ribosomal protein bL36 family.

This Phytoplasma australiense protein is Large ribosomal subunit protein bL36.